The chain runs to 661 residues: Pentatricopeptide repeat-containing protein At5g66631 (661 aa).

PPR repeat units lie at residues 139–173 (VHFS…GEEK), 176–210 (CTES…GGIP), 211–245 (NSRT…RITR), 246–280 (TLKH…GKFP), 410–444 (DAYT…GIKL), 445–475 (PFST…DRTL), 484–518 (LMLL…GVSP), 519–553 (DIQT…GLEP), and 554–588 (DPYM…NLMP).

It belongs to the PPR family. P subfamily.

This is Pentatricopeptide repeat-containing protein At5g66631 from Arabidopsis thaliana (Mouse-ear cress).